The primary structure comprises 58 residues: Large ribosomal subunit protein uL30 (58 aa).

Belongs to the universal ribosomal protein uL30 family. Part of the 50S ribosomal subunit.

The polypeptide is Large ribosomal subunit protein uL30 (Acinetobacter baylyi (strain ATCC 33305 / BD413 / ADP1)).